The sequence spans 292 residues: tRNA dimethylallyltransferase (292 aa).

5–12 provides a ligand contact to ATP; it reads APTGAGKT. Residue 7 to 12 participates in substrate binding; that stretch reads TGAGKT. The tract at residues 29–32 is interaction with substrate tRNA; sequence DSRQ.

It belongs to the IPP transferase family. In terms of assembly, monomer. Mg(2+) is required as a cofactor.

The catalysed reaction is adenosine(37) in tRNA + dimethylallyl diphosphate = N(6)-dimethylallyladenosine(37) in tRNA + diphosphate. Functionally, catalyzes the transfer of a dimethylallyl group onto the adenine at position 37 in tRNAs that read codons beginning with uridine, leading to the formation of N6-(dimethylallyl)adenosine (i(6)A). In Leptospira borgpetersenii serovar Hardjo-bovis (strain JB197), this protein is tRNA dimethylallyltransferase.